The following is a 414-amino-acid chain: Enolase (414 aa).

A (2R)-2-phosphoglycerate-binding site is contributed by Gln-162. Glu-204 (proton donor) is an active-site residue. Mg(2+) contacts are provided by Asp-239, Glu-280, and Asp-307. (2R)-2-phosphoglycerate-binding residues include Lys-332, Arg-361, Ser-362, and Lys-383. Lys-332 (proton acceptor) is an active-site residue.

Belongs to the enolase family. The cofactor is Mg(2+).

It is found in the cytoplasm. It localises to the secreted. Its subcellular location is the cell surface. The enzyme catalyses (2R)-2-phosphoglycerate = phosphoenolpyruvate + H2O. It participates in carbohydrate degradation; glycolysis; pyruvate from D-glyceraldehyde 3-phosphate: step 4/5. Its function is as follows. Catalyzes the reversible conversion of 2-phosphoglycerate (2-PG) into phosphoenolpyruvate (PEP). It is essential for the degradation of carbohydrates via glycolysis. The protein is Enolase of Campylobacter lari (strain RM2100 / D67 / ATCC BAA-1060).